The sequence spans 220 residues: Ribose-5-phosphate isomerase A (220 aa).

Substrate is bound by residues 25 to 28 (TGST), 80 to 83 (DGAD), and 93 to 96 (KGGG). The active-site Proton acceptor is Glu-102. Lys-120 contacts substrate.

The protein belongs to the ribose 5-phosphate isomerase family. Homodimer.

It carries out the reaction aldehydo-D-ribose 5-phosphate = D-ribulose 5-phosphate. The protein operates within carbohydrate degradation; pentose phosphate pathway; D-ribose 5-phosphate from D-ribulose 5-phosphate (non-oxidative stage): step 1/1. Catalyzes the reversible conversion of ribose-5-phosphate to ribulose 5-phosphate. The protein is Ribose-5-phosphate isomerase A of Bacillus cereus (strain ATCC 14579 / DSM 31 / CCUG 7414 / JCM 2152 / NBRC 15305 / NCIMB 9373 / NCTC 2599 / NRRL B-3711).